The primary structure comprises 734 residues: Photosystem I P700 chlorophyll a apoprotein A2 (734 aa).

Transmembrane regions (helical) follow at residues I46–A69, L135–Q158, L175–I199, I273–Y291, L330–Y353, A369–I395, A417–H439, and F517–V535. Residues C559 and C568 each contribute to the [4Fe-4S] cluster site. Transmembrane regions (helical) follow at residues A575 to W596 and L643 to I665. Residues H654, M662, and Y670 each coordinate chlorophyll a. W671 serves as a coordination point for phylloquinone. Residues L707–A727 traverse the membrane as a helical segment.

Belongs to the PsaA/PsaB family. In terms of assembly, the PsaA/B heterodimer binds the P700 chlorophyll special pair and subsequent electron acceptors. PSI consists of a core antenna complex that captures photons, and an electron transfer chain that converts photonic excitation into a charge separation. The eukaryotic PSI reaction center is composed of at least 11 subunits. The cofactor is P700 is a chlorophyll a/chlorophyll a' dimer, A0 is one or more chlorophyll a, A1 is one or both phylloquinones and FX is a shared 4Fe-4S iron-sulfur center..

The protein resides in the plastid. Its subcellular location is the chloroplast thylakoid membrane. It catalyses the reaction reduced [plastocyanin] + hnu + oxidized [2Fe-2S]-[ferredoxin] = oxidized [plastocyanin] + reduced [2Fe-2S]-[ferredoxin]. In terms of biological role, psaA and PsaB bind P700, the primary electron donor of photosystem I (PSI), as well as the electron acceptors A0, A1 and FX. PSI is a plastocyanin-ferredoxin oxidoreductase, converting photonic excitation into a charge separation, which transfers an electron from the donor P700 chlorophyll pair to the spectroscopically characterized acceptors A0, A1, FX, FA and FB in turn. Oxidized P700 is reduced on the lumenal side of the thylakoid membrane by plastocyanin. This chain is Photosystem I P700 chlorophyll a apoprotein A2, found in Marchantia polymorpha (Common liverwort).